Here is a 693-residue protein sequence, read N- to C-terminus: F-box protein MAX2 (693 aa).

In terms of domain architecture, F-box spans 3-50 (STTLSDLPDVILSTISSLVSDSRARNSLSLVSHKFLALERSTRSHLTI). 14 LRR repeats span residues 9–34 (LPDVILSTISSLVSDSRARNSLSLVS), 49–74 (TIRGNARDLSLVPDCFRSISHLDLSF), 75–100 (LSPWGHTLLASLPIDHQNLLALRLKF), 110–135 (VYTRSPSSLELLLPQWPRIRHIKLLR), 141–167 (SQIPTGGDFVPIFEHCGGFLESLDLSN), 168–196 (FYHWTEDLPPVLLRYADVAARLTRLDLLT), 200–225 (TEGYKSSEIVSITKSCPNLKTFRVAC), 232–257 (FEFVGDETLSAVATSSPKLTLLHMVD), 274–299 (DSAVTAGTLIEVFSGLPNLEELVLDV), 302–327 (DVKHSGVALEALNSKCKKLRVLKLGQ), 332–356 (CSATEWRRLDGVALCGGLQSLSIKN), 357–382 (SGDLTDMGLVAIGRGCCKLTTFEIQG), 383–409 (CENVTVDGLRTMVSLRSKTLTDVRISC), and 410–436 (CKNLDTAASLKAIEPICDRIKRLHIDC). Residues 445-465 (EVEGRVETSEADHEEEDDGYE) are disordered. LRR repeat units follow at residues 480-505 (CSTSDVNGFCSEDRVWEKLEYLSLWI), 508-532 (GEFLTPLPMTGLDDCPNLEEIRIKI), 541-565 (RPAEPEFGLSCLALYPKLSKMQLDC), and 608-637 (DRDVNQRSLSLPGAGLLQECLTLRKLFIHG).

Part of a SCF (SKP1-cullin-F-box) protein ligase complex. Interacts with SKP1A/ASK1. Interacts with CUL1. Interacts with SMXL6, SMXL7 and SMXL8. Interacts with D14. Forms a complex with D14 and SKP1A/ASK1 in presence of strigolactone. Expressed in the vasculature of growing leaves and roots, rosette axillary bud, flowers, siliques, funiculi and stems.

Its subcellular location is the nucleus. It participates in protein modification; protein ubiquitination. Functionally, component of SCF(ASK-cullin-F-box) E3 ubiquitin ligase complexes, which may mediate the ubiquitination and subsequent proteasomal degradation of target proteins. Promotes the senescence. Is necessary for responses to strigolactones and karrikins. Contributes to the selective repression of axillary shoots and moderates the branching by regulating negatively the auxin transport in primary stems, in an AXR1-independent manner. Required for the progression of leaf senescence mediated by methyl jasmonate. Required at each node to suppress axillary bud growth. The chain is F-box protein MAX2 from Arabidopsis thaliana (Mouse-ear cress).